Reading from the N-terminus, the 593-residue chain is Tyrosine-protein phosphatase non-receptor type 9 (593 aa).

Met1 bears the N-acetylmethionine mark. Positions 1–21 (MEPATAPRPDMAPELTPEEEQ) are disordered. Residues 84–243 (EEPLRSEILS…NLGGYIKIDL (160 aa)) enclose the CRAL-TRIO domain. Residues 303 to 574 (IYEEYEDIRR…YFCYKAILEF (272 aa)) form the Tyrosine-protein phosphatase domain. Substrate contacts are provided by residues Asp470, 515–521 (CSAGIGR), and Gln559. Cys515 acts as the Phosphocysteine intermediate in catalysis.

The protein belongs to the protein-tyrosine phosphatase family. Non-receptor class 3 subfamily.

It localises to the cytoplasm. The catalysed reaction is O-phospho-L-tyrosyl-[protein] + H2O = L-tyrosyl-[protein] + phosphate. Functionally, protein-tyrosine phosphatase that could participate in the transfer of hydrophobic ligands or in functions of the Golgi apparatus. The protein is Tyrosine-protein phosphatase non-receptor type 9 (Ptpn9) of Rattus norvegicus (Rat).